A 479-amino-acid chain; its full sequence is Aldehyde dehydrogenase family 3 member B3 (479 aa).

Active-site residues include Glu223 and Cys257. A lipid anchor (S-geranylgeranyl cysteine) is attached at Cys476. The propeptide at 477-479 (TLL) is removed in mature form.

Belongs to the aldehyde dehydrogenase family. In terms of processing, geranylgeranylation is important for membrane localization and enzyme activity. In terms of tissue distribution, expressed in testis, kidney, small intestine, spleen, white adipose tissue, liver and lung.

It localises to the cell membrane. The enzyme catalyses an aldehyde + NAD(+) + H2O = a carboxylate + NADH + 2 H(+). It carries out the reaction hexadecanoate + NADH + 2 H(+) = hexadecanal + NAD(+) + H2O. It catalyses the reaction octanal + NAD(+) + H2O = octanoate + NADH + 2 H(+). Oxidizes medium and long chain aldehydes into non-toxic fatty acids. This Mus musculus (Mouse) protein is Aldehyde dehydrogenase family 3 member B3.